The sequence spans 275 residues: MSVQSAIRRRTAPDIRARKNGDPIVMLTSYHAHTAALVDRHCDVILVGDSLGNVMHGFETTVPVTLDMMILQGRAVMRGSQQALVVVDMPFGSYEASKEQAFHSAARILKETLCGAVKLEGGVKMAETIAFLTARGVPVMGHVGLTPQSINTLGSFRAQGREEGTWRPIEDDARAVAEAGAFSMVIEAVAEPLARKITESVAIPTIGIGASPACDGQVLVLEDMLGLSPRAPKFVRRYGELGPMIEAAIEGYARDVRSRAFPGPEHVYAMKPKAS.

Mg(2+)-binding residues include Asp-49 and Asp-88. Residues Asp-49 to Ser-50, Asp-88, and Lys-118 each bind 3-methyl-2-oxobutanoate. Glu-120 serves as a coordination point for Mg(2+). The Proton acceptor role is filled by Glu-187.

Belongs to the PanB family. In terms of assembly, homodecamer; pentamer of dimers. Mg(2+) serves as cofactor.

The protein localises to the cytoplasm. It catalyses the reaction 3-methyl-2-oxobutanoate + (6R)-5,10-methylene-5,6,7,8-tetrahydrofolate + H2O = 2-dehydropantoate + (6S)-5,6,7,8-tetrahydrofolate. It participates in cofactor biosynthesis; (R)-pantothenate biosynthesis; (R)-pantoate from 3-methyl-2-oxobutanoate: step 1/2. Catalyzes the reversible reaction in which hydroxymethyl group from 5,10-methylenetetrahydrofolate is transferred onto alpha-ketoisovalerate to form ketopantoate. The sequence is that of 3-methyl-2-oxobutanoate hydroxymethyltransferase from Nitrobacter hamburgensis (strain DSM 10229 / NCIMB 13809 / X14).